Reading from the N-terminus, the 753-residue chain is Transcription factor SOX-30 (753 aa).

Disordered stretches follow at residues 1-45 (MERA…TLSA) and 140-161 (QELGPGLDPSVGPRGGVETGPR). Residues 7 to 22 (EPQPQQRPLRPAPPLL) are compositionally biased toward pro residues. Positions 337 to 405 (VKRPMNAFMV…KHREEFPGWV (69 aa)) form a DNA-binding region, HMG box. Disordered regions lie at residues 514 to 540 (AGPSQTDTHQLHSEGTHTVKQPTPVSL) and 726 to 753 (PTSTPSSIQQVNVTDSDEEEEEKVLRDL). 2 stretches are compositionally biased toward polar residues: residues 531–540 (TVKQPTPVSL) and 726–739 (PTSTPSSIQQVNVT).

Interacts with CTNNB1, competitively inhibiting CTNNB1-TCF7L2/TCF4 interaction.

It is found in the nucleus. The protein localises to the cytoplasm. Its function is as follows. Acts both as a transcriptional activator and a repressor. Binds to the DNA sequence 5'-ACAAT-3' and shows a preference for guanine residues surrounding this core motif. Binds to its own promoter and activates its own transcription. Required to activate the expression of postmeiotic genes involved in spermiogenesis. Binds to the promoter region of CTNNB1 and represses its transcription which leads to inhibition of Wnt signaling. Also inhibits Wnt signaling by binding to the CTNNB1 protein, preventing interaction of CTNNB1 with TCF7L2/TCF4. The protein is Transcription factor SOX-30 (SOX30) of Macaca fascicularis (Crab-eating macaque).